Consider the following 217-residue polypeptide: Photosynthetic NDH subunit of lumenal location 4, chloroplastic (217 aa).

The N-terminal 34 residues, methionine 1–leucine 34, are a transit peptide targeting the chloroplast. Intrachain disulfides connect cysteine 87/cysteine 99 and cysteine 188/cysteine 193. The region spanning glycine 112 to tyrosine 211 is the PPIase FKBP-type domain.

This sequence belongs to the FKBP-type PPIase family. In terms of assembly, part of the chloroplast NDH complex, composed of a mixture of chloroplast and nucleus encoded subunits. Component of the NDH lumenal subcomplex, at least composed of PnsL1, PnsL2, PnsL3, PnsL4 and PnsL5.

Its subcellular location is the plastid. The protein localises to the chloroplast thylakoid lumen. The enzyme catalyses [protein]-peptidylproline (omega=180) = [protein]-peptidylproline (omega=0). Functionally, NDH shuttles electrons from NAD(P)H:plastoquinone, via FMN and iron-sulfur (Fe-S) centers, to quinones in the photosynthetic chain and possibly in a chloroplast respiratory chain. The immediate electron acceptor for the enzyme in this species is believed to be plastoquinone. Couples the redox reaction to proton translocation, and thus conserves the redox energy in a proton gradient. PPIases accelerate the folding of proteins. It catalyzes the cis-trans isomerization of proline imidic peptide bonds in oligopeptides. Seems to be essential for stabilizing the NDH subcomplex A. In Arabidopsis thaliana (Mouse-ear cress), this protein is Photosynthetic NDH subunit of lumenal location 4, chloroplastic.